The following is a 218-amino-acid chain: ER lumen protein-retaining receptor (218 aa).

Residues 1 to 2 (MN) are Lumenal-facing. A helical membrane pass occupies residues 3–23 (LFSFLGDMLHLGSMLILLFKI). Topologically, residues 24–57 (KNDKSCAGVSLKSQILFTIVFTARYLDLFTNYVS) are cytoplasmic. Residues 58 to 78 (LYITFMKITYIAVSYYTLHLI) traverse the membrane as a helical segment. Topologically, residues 79–94 (ARKYKFTYDKDHDTFK) are lumenal. The chain crosses the membrane as a helical span at residues 95-115 (IVYLIASCAILSLITYDKTTI). Over 116–123 (GIYSTFLE) the chain is Cytoplasmic. A helical membrane pass occupies residues 124–144 (ILWTFSIYLESIAILPQLILL). The Lumenal segment spans residues 145–152 (QRTGEVEA). A helical membrane pass occupies residues 153 to 173 (LTSNYIVLLGGYRAFYLFNWI). Over 174–184 (YRITFYNWSGK) the chain is Cytoplasmic. Residues 185-205 (IEMLSGLLQTILYADFFYYYA) traverse the membrane as a helical segment. Residues 206 to 218 (KSRMYGKKLVLPQ) lie on the Lumenal side of the membrane.

Belongs to the ERD2 family.

The protein resides in the endoplasmic reticulum membrane. In terms of biological role, required for the retention of luminal endoplasmic reticulum proteins. Determines the specificity of the luminal ER protein retention system. Also required for normal vesicular traffic through the Golgi. The sequence is that of ER lumen protein-retaining receptor (kdelr) from Dictyostelium discoideum (Social amoeba).